We begin with the raw amino-acid sequence, 694 residues long: Nuclear factor erythroid 2-related factor 3 (694 aa).

Positions 133–150 are enriched in low complexity; sequence ASSTGGAGASVDGGSQAV. Disordered stretches follow at residues 133-256 and 330-357; these read ASST…LNGT and DPTA…QTLP. Basic and acidic residues-rich tracts occupy residues 193-217 and 231-254; these read GVLR…RVSA and NKIA…RHLN. Over residues 333-357 the composition is skewed to polar residues; it reads ARTSQSQEPFLQLNSHTTNPEQTLP. The region spanning 578–641 is the bZIP domain; that stretch reads LIRDIRRRGK…NIMKQKLHDL (64 aa). The interval 580 to 599 is basic motif; it reads RDIRRRGKNKVAAQNCRKRK. Residues 606-620 are leucine-zipper; sequence LEDDVCNLQAKKETL.

It belongs to the bZIP family. CNC subfamily. Heterodimer with MAFG, MAFK and other small MAF proteins that binds to the MAF recognition elements (MARE). In terms of tissue distribution, highly expressed in human placenta and also in B-cell and monocyte cell lines. Low expression in heart, brain, lung, skeletal muscle, kidney and pancreas.

The protein resides in the nucleus. Functionally, activates erythroid-specific, globin gene expression. The polypeptide is Nuclear factor erythroid 2-related factor 3 (NFE2L3) (Homo sapiens (Human)).